The chain runs to 186 residues: UPF0301 protein Nmul_A2478 (186 aa).

The protein belongs to the UPF0301 (AlgH) family.

The protein is UPF0301 protein Nmul_A2478 of Nitrosospira multiformis (strain ATCC 25196 / NCIMB 11849 / C 71).